Consider the following 448-residue polypeptide: MASDKQKAERAEVAARLAAEDLHDINKSGGADVTMYKVTERTTEHPPEQDRPGVIGSVFRAVQGTYEHARDAVVGKTHEAAESTKEGAQIASEKAVGAKDATVEKAKETADYTAEKVGEYKDYTVDKAKEAKDTTAEKAKETANYTADKAVEAKDKTAEKIGEYKDYAVDKAVEAKDKTAEKAKETANYTADKAKEAKDKTAEKVGEYKDYTVDKAVEARDYTAEKAIEAKDKTAEKTGEYKDYTVEKATEGKDVTVSKLGELKDSAVETAKRAMGFLSGKTEEAKGKAVETKDTAKENMEKAGEVTRQKMEEMRLEGKELKEEAGAKAQEASQKTRESTESGAQKAEETKDSAAVRGNEAKGTIFGALGNVTEAIKSKLTMPSDIVEETRAAREHGGTGRTVVEVKVEDSKPGKVATSLKASDQMTGQTFNDVGRMDDDARKDKGKL.

Composition is skewed to basic and acidic residues over residues 282-326 and 334-354; these read TEEA…EEAG and QKTR…KDSA. Disordered regions lie at residues 282-360 and 411-448; these read TEEA…RGNE and SKPG…KGKL. A coiled-coil region spans residues 297 to 331; it reads KENMEKAGEVTRQKMEEMRLEGKELKEEAGAKAQE. The span at 420–432 shows a compositional bias: polar residues; it reads LKASDQMTGQTFN. Positions 435 to 448 are enriched in basic and acidic residues; the sequence is GRMDDDARKDKGKL.

Belongs to the LEA type 4 family. In terms of tissue distribution, expressed in mature seeds.

Functionally, may be involved in the BHLH109-mediated regulation of somatic embryogenesis. The polypeptide is Late embryogenesis abundant protein ECP63 (Arabidopsis thaliana (Mouse-ear cress)).